The following is a 183-amino-acid chain: DELTA-miturgitoxin-Cp1b (183 aa).

The signal sequence occupies residues Met-1–Ser-20. The propeptide occupies Glu-21–Arg-47. The short motif at Asp-44–Arg-47 is the Processing quadruplet motif element. 8 disulfides stabilise this stretch: Cys-51/Cys-66, Cys-58/Cys-75, Cys-65/Cys-88, Cys-77/Cys-86, Cys-115/Cys-130, Cys-122/Cys-139, Cys-129/Cys-157, and Cys-141/Cys-155. The tract at residues Gln-164–Ile-177 is predicted alpha-helix. Trp-181 is modified (tryptophan amide).

It belongs to the neurotoxin 19 (CSTX) family. Double-CSTX subfamily. Post-translationally, cleavage of the propeptide depends on the processing quadruplet motif (XXXR, with at least one of X being E). As to expression, expressed by the venom gland.

The protein resides in the secreted. Its subcellular location is the target cell membrane. Functionally, spider venom toxin that exhibits cytolytic activity by forming an alpha-helix across the membrane. Lethal to insect larvae. Causes instant paralysis and death in the larvae of the flesh fly (S.carnaria) at doses of 20 ug/g, at doses of less than 10 ug/g causes reversible paralysis. Has cytolytic activity against insect Sf9 cells. Causes stable and irreversible depolarization of fly muscle fibers, leading to contracture at higher toxin concentrations. Destabilizes membranes. This Cheiracanthium punctorium (Yellow sac spider) protein is DELTA-miturgitoxin-Cp1b.